Reading from the N-terminus, the 486-residue chain is Serine/threonine-protein phosphatase 2A 56 kDa regulatory subunit alpha isoform (486 aa).

An N-acetylserine modification is found at serine 2. The tract at residues 22–52 (DGFTRKSVRKAQRQKRSQGSSQFRSQGSQAE) is disordered. Residues 27 to 37 (KSVRKAQRQKR) show a composition bias toward basic residues. Over residues 38–51 (SQGSSQFRSQGSQA) the composition is skewed to low complexity. Residues serine 41, serine 42, and serine 49 each carry the phosphoserine modification.

Belongs to the phosphatase 2A regulatory subunit B56 family. PP2A consists of a common heterodimeric core enzyme, composed of a 36 kDa catalytic subunit (subunit C) and a 65 kDa constant regulatory subunit (PR65 or subunit A), that associates with a variety of regulatory subunits. Proteins that associate with the core dimer include three families of regulatory subunits B (the R2/B/PR55/B55, R3/B''/PR72/PR130/PR59 and R5/B'/B56 families), the 48 kDa variable regulatory subunit, viral proteins, and cell signaling molecules. Interacts with SGO1. In terms of tissue distribution, widely expressed with highest levels in thymus and ovary.

It is found in the cytoplasm. It localises to the nucleus. The protein resides in the chromosome. Its subcellular location is the centromere. The B regulatory subunit might modulate substrate selectivity and catalytic activity, and might also direct the localization of the catalytic enzyme to a particular subcellular compartment. This chain is Serine/threonine-protein phosphatase 2A 56 kDa regulatory subunit alpha isoform (Ppp2r5a), found in Mus musculus (Mouse).